A 191-amino-acid polypeptide reads, in one-letter code: Pyridoxal 5'-phosphate synthase subunit PdxT (191 aa).

Gly-52 to Ser-54 is an L-glutamine binding site. Cys-81 acts as the Nucleophile in catalysis. Residues Arg-108 and Ile-136 to Arg-137 contribute to the L-glutamine site. Residues His-172 and Glu-174 each act as charge relay system in the active site.

It belongs to the glutaminase PdxT/SNO family. As to quaternary structure, in the presence of PdxS, forms a dodecamer of heterodimers. Only shows activity in the heterodimer.

It catalyses the reaction aldehydo-D-ribose 5-phosphate + D-glyceraldehyde 3-phosphate + L-glutamine = pyridoxal 5'-phosphate + L-glutamate + phosphate + 3 H2O + H(+). It carries out the reaction L-glutamine + H2O = L-glutamate + NH4(+). The protein operates within cofactor biosynthesis; pyridoxal 5'-phosphate biosynthesis. Catalyzes the hydrolysis of glutamine to glutamate and ammonia as part of the biosynthesis of pyridoxal 5'-phosphate. The resulting ammonia molecule is channeled to the active site of PdxS. The chain is Pyridoxal 5'-phosphate synthase subunit PdxT from Actinobacillus pleuropneumoniae serotype 5b (strain L20).